The following is a 117-amino-acid chain: Large ribosomal subunit protein uL18 (117 aa).

The protein belongs to the universal ribosomal protein uL18 family. Part of the 50S ribosomal subunit; part of the 5S rRNA/L5/L18/L25 subcomplex. Contacts the 5S and 23S rRNAs.

Functionally, this is one of the proteins that bind and probably mediate the attachment of the 5S RNA into the large ribosomal subunit, where it forms part of the central protuberance. The protein is Large ribosomal subunit protein uL18 of Sodalis glossinidius (strain morsitans).